The chain runs to 489 residues: Betaine aldehyde dehydrogenase (489 aa).

K(+) is bound by residues Thr26 and Asp93. 150 to 152 serves as a coordination point for NAD(+); the sequence is GAW. The active-site Charge relay system is the Lys162. 176 to 179 is an NAD(+) binding site; sequence KPSE. Val180 is a K(+) binding site. An NAD(+)-binding site is contributed by 229-232; sequence GVET. Leu245 contributes to the K(+) binding site. The Proton acceptor role is filled by Glu251. 3 residues coordinate NAD(+): Gly253, Cys285, and Glu386. Catalysis depends on Cys285, which acts as the Nucleophile. Cysteine sulfenic acid (-SOH) is present on Cys285. 2 residues coordinate K(+): Lys456 and Gly459. The Charge relay system role is filled by Glu463.

Belongs to the aldehyde dehydrogenase family. In terms of assembly, dimer of dimers. K(+) serves as cofactor.

It catalyses the reaction betaine aldehyde + NAD(+) + H2O = glycine betaine + NADH + 2 H(+). It functions in the pathway amine and polyamine biosynthesis; betaine biosynthesis via choline pathway; betaine from betaine aldehyde: step 1/1. Its function is as follows. Involved in the biosynthesis of the osmoprotectant glycine betaine. Catalyzes the irreversible oxidation of betaine aldehyde to the corresponding acid. This chain is Betaine aldehyde dehydrogenase, found in Burkholderia pseudomallei (strain 1106a).